The sequence spans 104 residues: Large ribosomal subunit protein uL24 (104 aa).

Belongs to the universal ribosomal protein uL24 family. In terms of assembly, part of the 50S ribosomal subunit.

Its function is as follows. One of two assembly initiator proteins, it binds directly to the 5'-end of the 23S rRNA, where it nucleates assembly of the 50S subunit. One of the proteins that surrounds the polypeptide exit tunnel on the outside of the subunit. The chain is Large ribosomal subunit protein uL24 from Bartonella quintana (strain Toulouse) (Rochalimaea quintana).